The primary structure comprises 500 residues: L-arabinose isomerase (500 aa).

Positions 306, 333, 350, and 450 each coordinate Mn(2+).

The protein belongs to the arabinose isomerase family. Homohexamer. Mn(2+) is required as a cofactor.

It catalyses the reaction beta-L-arabinopyranose = L-ribulose. It functions in the pathway carbohydrate degradation; L-arabinose degradation via L-ribulose; D-xylulose 5-phosphate from L-arabinose (bacterial route): step 1/3. Its function is as follows. Catalyzes the conversion of L-arabinose to L-ribulose. The polypeptide is L-arabinose isomerase (Klebsiella pneumoniae subsp. pneumoniae (strain ATCC 700721 / MGH 78578)).